The following is an 857-amino-acid chain: Protein sip-5 (857 aa).

6 disordered regions span residues 1 to 81 (MGNA…ARRL), 157 to 231 (GLPI…FKPT), 384 to 416 (SESS…APNV), 466 to 517 (FGRR…GNRR), 545 to 747 (KAEK…PMFN), and 763 to 857 (HAGK…QVTL). 2 stretches are compositionally biased toward basic and acidic residues: residues 7–16 (KESRGDDSGR) and 36–48 (ESSR…RHDL). The span at 49 to 61 (TGLLGRAAGGSSS) shows a compositional bias: low complexity. Residues 62-81 (HADERHERKETKQEREARRL) show a composition bias toward basic and acidic residues. 2 stretches are compositionally biased toward polar residues: residues 179 to 191 (ASPT…TNHL) and 199 to 208 (SLSTASEHST). Composition is skewed to low complexity over residues 209-230 (SNAG…PFKP), 384-394 (SESSVNSGSLS), and 476-504 (SASA…TANT). Basic and acidic residues predominate over residues 545 to 572 (KAEKEEQKEAKKREKEREKAEKKAEKAA). Low complexity-rich tracts occupy residues 586 to 604 (SRSG…PGLS) and 621 to 645 (ASVA…ALAP). Over residues 648 to 657 (STKDKGKAVD) the composition is skewed to basic and acidic residues. Low complexity predominate over residues 688–697 (SSASSASSSA). The span at 698–712 (VESNQGSYVPPSNLQ) shows a compositional bias: polar residues. The span at 783–799 (ETAKSGEGAGEHVEHVL) shows a compositional bias: basic and acidic residues. Polar residues-rich tracts occupy residues 800–838 (DSQT…STAS) and 845–857 (NETT…QVTL).

The protein belongs to the SIP5 family.

It is found in the cytoplasm. In terms of biological role, may negatively regulate the snf-1 kinase. The protein is Protein sip-5 (sip-5) of Neurospora crassa (strain ATCC 24698 / 74-OR23-1A / CBS 708.71 / DSM 1257 / FGSC 987).